The chain runs to 245 residues: Serine/arginine-rich splicing factor 1B (245 aa).

In terms of domain architecture, RRM 1 spans 15–90 (CRIYVGNLPP…YRLRVEFPRS (76 aa)). 2 disordered regions span residues 89–116 (RSGRGGGRGGGGGGGVGAPRGRYGPPSR) and 192–245 (KVDG…RSRT). Residues 91 to 106 (GRGGGRGGGGGGGVGA) show a composition bias toward gly residues. The region spanning 120-194 (YRVIVSGLPP…ETAYIRVKVD (75 aa)) is the RRM 2 domain. Basic residues predominate over residues 204–245 (SRSRSRSRSRSRSNSRSRSYSPRRSRGSPRYSPRHSRSRSRT).

This sequence belongs to the splicing factor SR family.

It is found in the cytoplasm. Its subcellular location is the nucleus speckle. Its function is as follows. May play a role in preventing exon skipping, ensuring the accuracy of splicing and regulating alternative splicing. This Danio rerio (Zebrafish) protein is Serine/arginine-rich splicing factor 1B (srsf1b).